We begin with the raw amino-acid sequence, 256 residues long: Small ribosomal subunit protein uS2 (256 aa).

The interval 229 to 256 (PVDDNGDYGDFDEAIDEYADETDASESE) is disordered. The segment covering 232–256 (DNGDYGDFDEAIDEYADETDASESE) has biased composition (acidic residues).

Belongs to the universal ribosomal protein uS2 family.

This Picosynechococcus sp. (strain ATCC 27264 / PCC 7002 / PR-6) (Agmenellum quadruplicatum) protein is Small ribosomal subunit protein uS2.